The sequence spans 171 residues: Large ribosomal subunit protein bL9 (171 aa).

Belongs to the bacterial ribosomal protein bL9 family.

In terms of biological role, binds to the 23S rRNA. The polypeptide is Large ribosomal subunit protein bL9 (Rickettsia typhi (strain ATCC VR-144 / Wilmington)).